Reading from the N-terminus, the 499-residue chain is Cytochrome P450 ARB_01131 (499 aa).

The first 21 residues, 1-21 (MLSLIVACLVLPLICYKLVRS), serve as a signal peptide directing secretion. Residue Asn-23 is glycosylated (N-linked (GlcNAc...) asparagine). Cys-437 contacts heme.

It belongs to the cytochrome P450 family. Heme is required as a cofactor.

Its function is as follows. Together with an NADPH cytochrome P450 the enzyme system catalyzes the terminal hydroxylation as the first step in the assimilation of alkanes and fatty acids. This chain is Cytochrome P450 ARB_01131, found in Arthroderma benhamiae (strain ATCC MYA-4681 / CBS 112371) (Trichophyton mentagrophytes).